Consider the following 338-residue polypeptide: Phenylalanine--tRNA ligase alpha subunit (338 aa).

Mg(2+) is bound at residue Glu253.

This sequence belongs to the class-II aminoacyl-tRNA synthetase family. Phe-tRNA synthetase alpha subunit type 1 subfamily. Tetramer of two alpha and two beta subunits. Requires Mg(2+) as cofactor.

It localises to the cytoplasm. The enzyme catalyses tRNA(Phe) + L-phenylalanine + ATP = L-phenylalanyl-tRNA(Phe) + AMP + diphosphate + H(+). This Syntrophus aciditrophicus (strain SB) protein is Phenylalanine--tRNA ligase alpha subunit.